A 1118-amino-acid chain; its full sequence is Sodium-driven chloride bicarbonate exchanger (1118 aa).

Disordered stretches follow at residues 1-23 and 58-97; these read MEIK…EEAV and GRKS…TPSQ. Residues 1–509 lie on the Cytoplasmic side of the membrane; sequence MEIKDQGAQM…DFRDAFSLQC (509 aa). Residues 59-76 are compositionally biased toward basic residues; it reads RKSHRRHRHRGHKHRKRD. A compositionally biased stretch (basic and acidic residues) spans 77–90; the sequence is RERDSGLEDGRESP. S89 carries the phosphoserine modification. T94 carries the phosphothreonine modification. Zn(2+) is bound by residues H221 and H223. 2 disordered regions span residues 269 to 310 and 457 to 476; these read AENK…KGPP and NGTA…GPEL. Position 276 is a phosphoserine (S276). The chain crosses the membrane as a helical span at residues 510–530; it reads LASFLFLYCACMSPVITFGGL. Residues 531-538 are Extracellular-facing; that stretch reads LGEATEGR. A helical transmembrane segment spans residues 539–559; sequence ISAIESLFGASMTGIAYSLFG. Residues 560–562 lie on the Cytoplasmic side of the membrane; sequence GQP. A helical transmembrane segment spans residues 563 to 583; the sequence is LTILGSTGPVLVFEKILFKFC. The Extracellular segment spans residues 584–596; the sequence is KEYGLSYLSLRAS. A helical transmembrane segment spans residues 597–617; it reads IGLWTATLCIILVATDASSLV. The Cytoplasmic portion of the chain corresponds to 618-626; the sequence is CYITRFTEE. The chain crosses the membrane as a helical span at residues 627–647; sequence AFASLICIIFIYEALEKLFEL. Topologically, residues 648–720 are extracellular; it reads SETYPINMHN…VGRACGHGHP (73 aa). N-linked (GlcNAc...) asparagine glycosylation is found at N677, N687, and N697. The helical transmembrane segment at 721–741 threads the bilayer; it reads YVPDVLFWSVILFFSTVTMSA. Topologically, residues 742–762 are cytoplasmic; sequence TLKQFKTSRYFPTKVRSIVSD. The helical transmembrane segment at 763–783 threads the bilayer; it reads FAVFLTILCMVLIDYAIGIPS. Over 784–809 the chain is Extracellular; sequence PKLQVPSVFKPTRDDRGWFVTPLGPN. A helical transmembrane segment spans residues 810–830; sequence PWWTIIAAIIPALLCTILIFM. Residues 831–855 are Cytoplasmic-facing; it reads DQQITAVIINRKEHKLKKGCGYHLD. The chain crosses the membrane as a helical span at residues 856–876; it reads LLMVAVMLGVCSIMGLPWFVA. Residues 877 to 912 lie on the Extracellular side of the membrane; that stretch reads ATVLSITHVNSLKLESECSAPGEQPKFLGIREQRVT. A helical transmembrane segment spans residues 913–933; it reads GLMIFILMGSSVFMTSILKFI. Residues 934 to 935 are Cytoplasmic-facing; it reads PM. A helical transmembrane segment spans residues 936-956; that stretch reads PVLYGVFLYMGASSLKGIQLF. Over 957–998 the chain is Extracellular; sequence DRIKLFWMPAKHQPDFIYLRHVPLRKVHLFTVIQMSCLGLLW. The chain crosses the membrane as a helical span at residues 999 to 1019; that stretch reads IIKVSRAAIVFPMMVLALVFV. Residues 1020 to 1118 are Cytoplasmic-facing; it reads RKLMDFLFTK…SRFPSKSSPS (99 aa). 2 positions are modified to phosphoserine: S1057 and S1085.

Belongs to the anion exchanger (TC 2.A.31) family. In terms of processing, N-glycosylated. As to expression, in the brain, detected in cerebral cortex, subcortex, cerebellum, hippocampus and medulla (at protein level). In the cerebrum, expressed at high levels throughout the cortex, at lower levels in striatum and not detectable in the corpus callosum (at protein level). In the cerebellum, detected at high levels in the molecular layer but at very low levels in the granular layer (at protein level). In the central nervous system, detected in neurons in the olfactory bulb, cortex and cerebellum (at protein level). Within the hippocampus, abundantly expressed in CA3 pyramidal cells (at protein level). Strongly expressed in the retina with high levels in bipolar and amacrine cells (at protein level). Expressed in the epithelial cells of the choroid plexus. During embryonic development, expressed in neurons of the central nervous system. Also expressed in the peripheral nervous system and in non-neuronal tissues such as the dura and some epithelia including the acid-secreting epithelium of the stomach and the duodenal epithelium. In the embryonic retina, expression is restricted to the neuronal cell layer and the retinal pigment epithelium. In terms of tissue distribution, expressed at high levels in brain and at low levels in the pituitary, testis, kidney and ileum. Also expressed in pancreatic islets.

It is found in the basolateral cell membrane. It localises to the apical cell membrane. The protein resides in the cell projection. Its subcellular location is the dendrite. The protein localises to the axon. It is found in the perikaryon. It localises to the presynapse. The protein resides in the postsynapse. The enzyme catalyses 2 hydrogencarbonate(out) + chloride(in) + Na(+)(out) = 2 hydrogencarbonate(in) + chloride(out) + Na(+)(in). Its activity is regulated as follows. Zinc-binding negatively regulates its activity. Sodium/bicarbonate cotransporter which plays an important role in regulating intracellular pH. Has been shown to act as a sodium/bicarbonate cotransporter in exchange for intracellular chloride. Has also been shown to act as a sodium/biocarbonate cotransporter which is not responsible for net efflux of chloride, with the observed chloride efflux being due to chloride self-exchange. Controls neuronal pH and may contribute to the secretion of cerebrospinal fluid. Acting on presynaptic intracellular pH, it promotes GABA release, reduces the excitability of CA1 pyramidal neurons, and modulates short-term synaptic plasticity. Required in retinal cells to maintain normal pH which is necessary for normal vision. In the kidney, likely to mediate bicarbonate reclamation in the apical membrane of the proximal tubules. Its function is as follows. Sodium/bicarbonate cotransporter which mediates cotransport of sodium and bicarbonate in association with an efflux of intracellular chloride. This is Sodium-driven chloride bicarbonate exchanger from Mus musculus (Mouse).